The following is a 113-amino-acid chain: uncharacterized protein (113 aa).

Residues 94–113 (SKTGLDEQAHVQKAHDVQDV) form a disordered region. The span at 96 to 113 (TGLDEQAHVQKAHDVQDV) shows a compositional bias: basic and acidic residues.

Belongs to the geminiviridae protein AV2/V2 family. As to quaternary structure, interacts with host SGS3.

It is found in the host cytoplasm. Its subcellular location is the host perinuclear region. Functionally, through its interaction with host SGS3, acts as a suppressor of RNA-mediated gene silencing, also known as post-transcriptional gene silencing (PTGS), a mechanism of plant viral defense that limits the accumulation of viral RNAs. This is an uncharacterized protein from African cassava mosaic virus (isolate Nigerian) (ACMV).